The following is a 362-amino-acid chain: 3-dehydroquinate synthase (362 aa).

Residues 71 to 76 (DGEQYK), 105 to 109 (GVVGD), 129 to 130 (TT), lysine 142, lysine 151, and 169 to 172 (CLKT) each bind NAD(+). Residues glutamate 184, histidine 248, and histidine 265 each coordinate Zn(2+).

It belongs to the sugar phosphate cyclases superfamily. Dehydroquinate synthase family. Requires Co(2+) as cofactor. Zn(2+) serves as cofactor. NAD(+) is required as a cofactor.

The protein resides in the cytoplasm. It catalyses the reaction 7-phospho-2-dehydro-3-deoxy-D-arabino-heptonate = 3-dehydroquinate + phosphate. Its pathway is metabolic intermediate biosynthesis; chorismate biosynthesis; chorismate from D-erythrose 4-phosphate and phosphoenolpyruvate: step 2/7. In terms of biological role, catalyzes the conversion of 3-deoxy-D-arabino-heptulosonate 7-phosphate (DAHP) to dehydroquinate (DHQ). The polypeptide is 3-dehydroquinate synthase (Yersinia pseudotuberculosis serotype O:1b (strain IP 31758)).